The following is a 401-amino-acid chain: NADH-quinone oxidoreductase subunit D 2 (401 aa).

This sequence belongs to the complex I 49 kDa subunit family. In terms of assembly, NDH-1 is composed of 14 different subunits. Subunits NuoB, C, D, E, F, and G constitute the peripheral sector of the complex.

The protein resides in the cell inner membrane. It carries out the reaction a quinone + NADH + 5 H(+)(in) = a quinol + NAD(+) + 4 H(+)(out). NDH-1 shuttles electrons from NADH, via FMN and iron-sulfur (Fe-S) centers, to quinones in the respiratory chain. The immediate electron acceptor for the enzyme in this species is believed to be ubiquinone. Couples the redox reaction to proton translocation (for every two electrons transferred, four hydrogen ions are translocated across the cytoplasmic membrane), and thus conserves the redox energy in a proton gradient. The polypeptide is NADH-quinone oxidoreductase subunit D 2 (Thermodesulfovibrio yellowstonii (strain ATCC 51303 / DSM 11347 / YP87)).